A 479-amino-acid chain; its full sequence is Monodehydroascorbate reductase 1, peroxisomal (479 aa).

At 1 to 3 (MGR) the chain is on the cytoplasmic side. A helical membrane pass occupies residues 4–24 (AFEYVILGGGVAAGYAALEFV). FAD-binding positions include 12-15 (GGVA), Glu-41, Arg-48, Lys-53, and 147-148 (RN). Topologically, residues 25 to 445 (RRNGGASSQE…QATGGGGKPT (421 aa)) are peroxisomal. Residues 172–178 (GGYIGME), Arg-202, and Gly-260 contribute to the NAD(+) site. Residues 174–178 (YIGME), Arg-202, and Gly-260 contribute to the NADP(+) site. Asp-297 contributes to the FAD binding site. 314–315 (EH) contacts NAD(+). 314 to 315 (EH) provides a ligand contact to NADP(+). Val-316 serves as a coordination point for FAD. An L-ascorbate-binding site is contributed by Arg-320. Tyr-347 contributes to the FAD binding site. NAD(+) is bound at residue Tyr-347. Residue Tyr-347 coordinates NADP(+). Arg-349 contributes to the L-ascorbate binding site. A helical membrane pass occupies residues 446–466 (CAWHATVGVAAAVSIAAFACW). Topologically, residues 467-479 (YGWQAPYVLKRDF) are cytoplasmic.

Belongs to the FAD-dependent oxidoreductase family. FAD serves as cofactor.

The protein resides in the peroxisome membrane. It catalyses the reaction 2 monodehydro-L-ascorbate radical + NADH + H(+) = 2 L-ascorbate + NAD(+). Catalyzes the conversion of monodehydroascorbate to ascorbate, oxidizing NADH in the process. Ascorbate is a major antioxidant against reactive oxygen species (ROS) and nitric oxide (NO). The polypeptide is Monodehydroascorbate reductase 1, peroxisomal (Oryza sativa subsp. japonica (Rice)).